The primary structure comprises 362 residues: MKLELSLEQWQQVKDFAIRNLNLSSISKADCDLSEYIPYYNKWLENNYHADLEYMVKHGSKRFIPNELVPGTNSVIVATLNYLNRPVNVKTEVKRLRTTSNIADISIYAHGRDYHKVMKKKLQQLGEFIDELTGGHQFRVFTDSAPVLERPLAEKAGLGWQGKSSMLMNKAQGSFFFIGVIYSNLDLSKLPDSPKHQDSCGKCQACIKLCPTGAIQPGKMIDSRKCISYLTIENKGSIPLELRDKIGTRIYGCDDCQLVCPFNNYAPITTEKDFQQRDFLVNKPLLELLAWSEKDFDKYTQGSAIRRIGYAAWIRNIAIAVGNSPFNQDNIQALELKKLEFSDNQLVLEHLDWAINKQKLLS.

The active-site Proton donor is the aspartate 143. A 4Fe-4S ferredoxin-type domain is found at 191–220; the sequence is PDSPKHQDSCGKCQACIKLCPTGAIQPGKM. The [4Fe-4S] cluster site is built by cysteine 200, cysteine 203, cysteine 206, cysteine 210, cysteine 226, cysteine 253, cysteine 256, and cysteine 260.

The protein belongs to the QueG family. As to quaternary structure, monomer. The cofactor is cob(II)alamin. Requires [4Fe-4S] cluster as cofactor.

Its subcellular location is the cytoplasm. It catalyses the reaction epoxyqueuosine(34) in tRNA + AH2 = queuosine(34) in tRNA + A + H2O. The protein operates within tRNA modification; tRNA-queuosine biosynthesis. Catalyzes the conversion of epoxyqueuosine (oQ) to queuosine (Q), which is a hypermodified base found in the wobble positions of tRNA(Asp), tRNA(Asn), tRNA(His) and tRNA(Tyr). This Francisella cf. novicida (strain Fx1) protein is Epoxyqueuosine reductase.